Consider the following 480-residue polypeptide: UDP-N-acetylmuramoylalanine--D-glutamate ligase (480 aa).

110–116 (GTNGKST) provides a ligand contact to ATP.

Belongs to the MurCDEF family.

It is found in the cytoplasm. The catalysed reaction is UDP-N-acetyl-alpha-D-muramoyl-L-alanine + D-glutamate + ATP = UDP-N-acetyl-alpha-D-muramoyl-L-alanyl-D-glutamate + ADP + phosphate + H(+). It participates in cell wall biogenesis; peptidoglycan biosynthesis. Its function is as follows. Cell wall formation. Catalyzes the addition of glutamate to the nucleotide precursor UDP-N-acetylmuramoyl-L-alanine (UMA). The sequence is that of UDP-N-acetylmuramoylalanine--D-glutamate ligase from Synechococcus sp. (strain JA-2-3B'a(2-13)) (Cyanobacteria bacterium Yellowstone B-Prime).